We begin with the raw amino-acid sequence, 319 residues long: Nuclear hormone receptor family member nhr-174 (319 aa).

Positions Asp-7–Gln-81 form a DNA-binding region, nuclear receptor. 2 consecutive NR C4-type zinc fingers follow at residues Cys-10–Cys-31 and Cys-47–Cys-63. The NR LBD domain occupies Glu-130–Phe-319.

This sequence belongs to the nuclear hormone receptor family.

It localises to the nucleus. In terms of biological role, orphan nuclear receptor. The chain is Nuclear hormone receptor family member nhr-174 (nhr-174) from Caenorhabditis elegans.